An 818-amino-acid chain; its full sequence is Piwi-like protein (818 aa).

One can recognise a PAZ domain in the interval 220-339 (RINRVLNDNS…ITGELCFLCG (120 aa)). In terms of domain architecture, Piwi spans 501–800 (KIALVFVPDD…LAELIGKVHK (300 aa)).

The protein belongs to the argonaute family. Piwi subfamily.

This is Piwi-like protein (iwi) from Dugesia japonica (Planarian).